A 296-amino-acid chain; its full sequence is Fructose-bisphosphate aldolase class 1 (296 aa).

The active-site Proton acceptor is the Glu175. The Schiff-base intermediate with dihydroxyacetone-P role is filled by Lys212.

This sequence belongs to the class I fructose-bisphosphate aldolase family.

It carries out the reaction beta-D-fructose 1,6-bisphosphate = D-glyceraldehyde 3-phosphate + dihydroxyacetone phosphate. It functions in the pathway carbohydrate degradation; glycolysis; D-glyceraldehyde 3-phosphate and glycerone phosphate from D-glucose: step 4/4. The chain is Fructose-bisphosphate aldolase class 1 from Staphylococcus aureus (strain MRSA252).